The primary structure comprises 489 residues: 3-octaprenyl-4-hydroxybenzoate carboxy-lyase (489 aa).

Residue Asn172 coordinates Mn(2+). Prenylated FMN is bound by residues 175–177, 189–191, and 194–195; these read IYR, RWL, and RG. Glu238 lines the Mn(2+) pocket. Asp287 functions as the Proton donor in the catalytic mechanism.

The protein belongs to the UbiD family. In terms of assembly, homohexamer. Prenylated FMN is required as a cofactor. It depends on Mn(2+) as a cofactor.

It is found in the cell membrane. It carries out the reaction a 4-hydroxy-3-(all-trans-polyprenyl)benzoate + H(+) = a 2-(all-trans-polyprenyl)phenol + CO2. It participates in cofactor biosynthesis; ubiquinone biosynthesis. Its function is as follows. Catalyzes the decarboxylation of 3-octaprenyl-4-hydroxy benzoate to 2-octaprenylphenol, an intermediate step in ubiquinone biosynthesis. This chain is 3-octaprenyl-4-hydroxybenzoate carboxy-lyase, found in Salmonella arizonae (strain ATCC BAA-731 / CDC346-86 / RSK2980).